Consider the following 29-residue polypeptide: Dermaseptin-J6 (29 aa).

The residue at position 29 (V29) is a Valine amide.

As to expression, expressed by the skin glands.

It is found in the secreted. Its function is as follows. Has antimicrobial activity. This chain is Dermaseptin-J6, found in Phasmahyla jandaia (Jandaia leaf frog).